The sequence spans 421 residues: Histidine--tRNA ligase (421 aa).

This sequence belongs to the class-II aminoacyl-tRNA synthetase family. In terms of assembly, homodimer.

It localises to the cytoplasm. The enzyme catalyses tRNA(His) + L-histidine + ATP = L-histidyl-tRNA(His) + AMP + diphosphate + H(+). The sequence is that of Histidine--tRNA ligase from Coxiella burnetii (strain Dugway 5J108-111).